Reading from the N-terminus, the 426-residue chain is Protein EARLY STARVATION 1, chloroplastic (426 aa).

The N-terminal 58 residues, 1–58 (MSEMAASSAISLLDIKLRRFGVGASNHELRLTKWFKGDQAGAPTRRFTCFADMLAPIR), are a transit peptide targeting the chloroplast. Disordered stretches follow at residues 106–127 (CTPRLTGPQSRDTPPKRDTGIA) and 396–426 (QPRERPPGVYPNLEFGPSPPPEPDLPPDQPQ). The span at 118–127 (TPPKRDTGIA) shows a compositional bias: basic and acidic residues. Residues 412-426 (PSPPPEPDLPPDQPQ) show a composition bias toward pro residues.

The protein belongs to the ESV1 family.

Its subcellular location is the plastid. It is found in the chloroplast stroma. It localises to the plastid stroma. Functionally, binds preferentially to highly ordered alpha-glucans, such as starch and crystalline maltodextrins. Involved in the organization of the starch granule matrix, thus influencing starch turnover by modulating the accessibility of starch polymers to modifying and degrading enzymes involved in phosphorylation, hydrolyzes and synthesis, including starch synthases (SSI and SSIII), starch phosphorylases (PHS1), isoamylase, beta-amylase, glucan water dikinase (GWD) and phosphoglucan water dikinase (PWD). Prevents GWD- and PWD-mediated starch phosphorylation, and subsequent degradation. Required for the control of starch degradation in leaves and starch distribution in nonphotosynthetic parts (e.g. cells immediately adjacent to veins, columella cells of root caps, stems, flowers and siliques) by limiting the hasty depletion of starch reserves during the night. Promotes gravitropic responses, negative in shoots but positive in roots, by maintaining starch granules (statoliths) accumulation in hypocotyls and roots columella, especially in dark conditions and in the endodermis, where starch is formed from transported glucose-6-phosphates. The chain is Protein EARLY STARVATION 1, chloroplastic from Arabidopsis thaliana (Mouse-ear cress).